Reading from the N-terminus, the 541-residue chain is Tyrosine-protein phosphatase non-receptor type 5 (541 aa).

Residues 1 to 55 are disordered; the sequence is MCCSERLLGLPQPVEMEAPDEAEGLPSKQKEMPPPPPPSPPSEPAQKLPPQGAGS. Residues 32-43 are compositionally biased toward pro residues; sequence MPPPPPPSPPSE. 2 helical membrane-spanning segments follow: residues 64 to 84 and 122 to 142; these read LCLF…LSGH and LLLV…WHLL. Ser221 carries the phosphoserine; by PKA modification. Thr231 is modified (phosphothreonine; by MAPK). The residue at position 244 (Ser244) is a Phosphoserine; by MAPK. In terms of domain architecture, Tyrosine-protein phosphatase spans 276-531; sequence LQAEFFEIPM…QFVHHAMSLY (256 aa). Residues Asp437, 472–478, and Gln516 contribute to the substrate site; that span reads CSAGIGR. Cys472 acts as the Phosphocysteine intermediate in catalysis.

Belongs to the protein-tyrosine phosphatase family. Non-receptor class subfamily. In terms of processing, phosphorylation at Ser-221 by PKA deactivates PTPN5. Phosphorylation at Thr-231 and Ser-244 by MAPKs stabilizes the phosphatase, dephosphorylation of these sites results in ubiquitin-mediated degradation of the active phosphatase. In terms of tissue distribution, STEP20 is expressed only in the CNS.

It is found in the endoplasmic reticulum membrane. It localises to the cytoplasm. It carries out the reaction O-phospho-L-tyrosyl-[protein] + H2O = L-tyrosyl-[protein] + phosphate. Functionally, may regulate the activity of several effector molecules involved in synaptic plasticity and neuronal cell survival, including MAPKs, Src family kinases and NMDA receptors. The chain is Tyrosine-protein phosphatase non-receptor type 5 (Ptpn5) from Mus musculus (Mouse).